The primary structure comprises 714 residues: Polyribonucleotide nucleotidyltransferase (714 aa).

Residues Asp488 and Asp494 each contribute to the Mg(2+) site. Positions 555–614 (PRIEVMNIPTDKIRDVIGSGGKVIREIVEKTGAKINIEDDGTVKIASSNGKEIEAAKKWI) constitute a KH domain. The S1 motif domain maps to 624–692 (GEIYEGTVVK…ERGKVRLSMK (69 aa)).

Belongs to the polyribonucleotide nucleotidyltransferase family. It depends on Mg(2+) as a cofactor.

It localises to the cytoplasm. The enzyme catalyses RNA(n+1) + phosphate = RNA(n) + a ribonucleoside 5'-diphosphate. In terms of biological role, involved in mRNA degradation. Catalyzes the phosphorolysis of single-stranded polyribonucleotides processively in the 3'- to 5'-direction. This is Polyribonucleotide nucleotidyltransferase from Brucella ovis (strain ATCC 25840 / 63/290 / NCTC 10512).